A 359-amino-acid polypeptide reads, in one-letter code: F-box protein At5g49610 (359 aa).

An F-box domain is found at 3–52; it reads NQKGALFPDEVILQILARLPVKSLFRFKSVCKSWYRLPSDKYFTSLFNQL.

Part of a SCF (SKP1-cullin-F-box) protein ligase complex. Interacts with SKP1A, SKP1B, ASK11, ASK12, ASK13 and ASK14.

It functions in the pathway protein modification; protein ubiquitination. The chain is F-box protein At5g49610 from Arabidopsis thaliana (Mouse-ear cress).